The following is an 874-amino-acid chain: Alanine--tRNA ligase (874 aa).

4 residues coordinate Zn(2+): His-562, His-566, Cys-664, and His-668.

Belongs to the class-II aminoacyl-tRNA synthetase family. Requires Zn(2+) as cofactor.

It localises to the cytoplasm. It catalyses the reaction tRNA(Ala) + L-alanine + ATP = L-alanyl-tRNA(Ala) + AMP + diphosphate. Its function is as follows. Catalyzes the attachment of alanine to tRNA(Ala) in a two-step reaction: alanine is first activated by ATP to form Ala-AMP and then transferred to the acceptor end of tRNA(Ala). Also edits incorrectly charged Ser-tRNA(Ala) and Gly-tRNA(Ala) via its editing domain. The protein is Alanine--tRNA ligase of Neisseria gonorrhoeae (strain ATCC 700825 / FA 1090).